Here is a 285-residue protein sequence, read N- to C-terminus: Pantothenate synthetase (285 aa).

ATP is bound at residue 30–37 (MGFLHEGH). His-37 serves as the catalytic Proton donor. Gln-61 is a binding site for (R)-pantoate. Gln-61 contacts beta-alanine. 148–151 (GKKD) is a binding site for ATP. Residue Gln-154 participates in (R)-pantoate binding. Residues Val-177 and 185–188 (LSSR) each bind ATP.

It belongs to the pantothenate synthetase family. Homodimer.

It is found in the cytoplasm. It carries out the reaction (R)-pantoate + beta-alanine + ATP = (R)-pantothenate + AMP + diphosphate + H(+). It functions in the pathway cofactor biosynthesis; (R)-pantothenate biosynthesis; (R)-pantothenate from (R)-pantoate and beta-alanine: step 1/1. Catalyzes the condensation of pantoate with beta-alanine in an ATP-dependent reaction via a pantoyl-adenylate intermediate. The chain is Pantothenate synthetase from Leptospira interrogans serogroup Icterohaemorrhagiae serovar copenhageni (strain Fiocruz L1-130).